The chain runs to 360 residues: Peptide chain release factor 1 (360 aa).

Residue Q234 is modified to N5-methylglutamine. A disordered region spans residues 285–305 (RAQGIAEDRKSQVGTGDRSER).

The protein belongs to the prokaryotic/mitochondrial release factor family. Methylated by PrmC. Methylation increases the termination efficiency of RF1.

The protein localises to the cytoplasm. In terms of biological role, peptide chain release factor 1 directs the termination of translation in response to the peptide chain termination codons UAG and UAA. The polypeptide is Peptide chain release factor 1 (Clostridium beijerinckii (strain ATCC 51743 / NCIMB 8052) (Clostridium acetobutylicum)).